Reading from the N-terminus, the 420-residue chain is Glucose-1-phosphate adenylyltransferase (420 aa).

Alpha-D-glucose 1-phosphate-binding positions include Y107, G172, 187-188, and S205; that span reads EK.

Belongs to the bacterial/plant glucose-1-phosphate adenylyltransferase family. In terms of assembly, homotetramer.

The enzyme catalyses alpha-D-glucose 1-phosphate + ATP + H(+) = ADP-alpha-D-glucose + diphosphate. The protein operates within glycan biosynthesis; glycogen biosynthesis. In terms of biological role, involved in the biosynthesis of ADP-glucose, a building block required for the elongation reactions to produce glycogen. Catalyzes the reaction between ATP and alpha-D-glucose 1-phosphate (G1P) to produce pyrophosphate and ADP-Glc. This is Glucose-1-phosphate adenylyltransferase from Rhizobium etli (strain CIAT 652).